Consider the following 359-residue polypeptide: Ornithine cyclodeaminase (359 aa).

L-ornithine contacts are provided by Arg-53 and Lys-77. NAD(+)-binding positions include Thr-92, Arg-120, 147–148, Asp-169, Thr-209, 232–235, Lys-239, and Ser-300; these read AQ and VGGD. Arg-120 is a binding site for L-ornithine. Asp-235 contacts L-ornithine. The active-site Proton donor/acceptor is the Asp-235. Position 301 (Val-301) interacts with L-ornithine.

Belongs to the ornithine cyclodeaminase/mu-crystallin family. NAD(+) serves as cofactor.

It carries out the reaction L-ornithine = L-proline + NH4(+). It functions in the pathway amino-acid biosynthesis; L-proline biosynthesis; L-proline from L-ornithine: step 1/1. Its function is as follows. Catalyzes the conversion of L-ornithine into L-proline with release of ammonia. This is Ornithine cyclodeaminase from Brucella melitensis biotype 1 (strain ATCC 23456 / CCUG 17765 / NCTC 10094 / 16M).